Reading from the N-terminus, the 231-residue chain is Large ribosomal subunit protein uL5m (231 aa).

The protein belongs to the universal ribosomal protein uL5 family.

The protein localises to the mitochondrion. The polypeptide is Large ribosomal subunit protein uL5m (RPL5) (Prototheca wickerhamii).